Reading from the N-terminus, the 117-residue chain is MADEEISKAFRDLQFKTNETRMRIVQGEQNKKVNHQKMRISESTKRNLIGLNEDLKYYRSVGRMFLLTDKASEIARHETEAKQSKDKIEAIDKQKEYLEKGLVEAESNLRELIQSRR.

Belongs to the prefoldin subunit beta family. As to quaternary structure, heterohexamer of two PFD-alpha type and four PFD-beta type subunits.

The protein localises to the cytoplasm. In terms of biological role, binds specifically to cytosolic chaperonin (c-CPN) and transfers target proteins to it. Binds to nascent polypeptide chain and promotes folding in an environment in which there are many competing pathways for nonnative proteins. Has a role in gonadogenesis. The polypeptide is Probable prefoldin subunit 1 (pfd-1) (Caenorhabditis briggsae).